The following is a 398-amino-acid chain: Dual-specificity RNA methyltransferase RlmN (398 aa).

Glu-100 acts as the Proton acceptor in catalysis. The 240-residue stretch at 106 to 345 (DGDRGTLCVS…TTVRTTRGDD (240 aa)) folds into the Radical SAM core domain. A disulfide bridge links Cys-113 with Cys-350. Cys-120, Cys-124, and Cys-127 together coordinate [4Fe-4S] cluster. S-adenosyl-L-methionine contacts are provided by residues 174–175 (GE), Ser-206, 228–230 (SLH), and Asn-307. The active-site S-methylcysteine intermediate is Cys-350.

The protein belongs to the radical SAM superfamily. RlmN family. The cofactor is [4Fe-4S] cluster.

It localises to the cytoplasm. It carries out the reaction adenosine(2503) in 23S rRNA + 2 reduced [2Fe-2S]-[ferredoxin] + 2 S-adenosyl-L-methionine = 2-methyladenosine(2503) in 23S rRNA + 5'-deoxyadenosine + L-methionine + 2 oxidized [2Fe-2S]-[ferredoxin] + S-adenosyl-L-homocysteine. It catalyses the reaction adenosine(37) in tRNA + 2 reduced [2Fe-2S]-[ferredoxin] + 2 S-adenosyl-L-methionine = 2-methyladenosine(37) in tRNA + 5'-deoxyadenosine + L-methionine + 2 oxidized [2Fe-2S]-[ferredoxin] + S-adenosyl-L-homocysteine. Functionally, specifically methylates position 2 of adenine 2503 in 23S rRNA and position 2 of adenine 37 in tRNAs. m2A2503 modification seems to play a crucial role in the proofreading step occurring at the peptidyl transferase center and thus would serve to optimize ribosomal fidelity. This is Dual-specificity RNA methyltransferase RlmN from Saccharophagus degradans (strain 2-40 / ATCC 43961 / DSM 17024).